A 34-amino-acid chain; its full sequence is Sarcoplasmic/endoplasmic reticulum calcium ATPase regulator DWORF (34 aa).

A helical membrane pass occupies residues 12-32 (IVPILLLVGWIVGCIIVIYIV).

As to quaternary structure, homooligomer. Can also form heterooligomers with other sarcoplasmic/endoplasmic reticulum calcium ATPase (SERCA) regulators ARLN, ERLN, PLN and SLN. Monomer. Interacts with ATP2A1/SERCA1; the interaction results in activation of ATP2A1. Interacts as a monomer with ATP2A2/SERCA2; the interaction results in activation of ATP2A2. In terms of tissue distribution, highly expressed in heart (at protein level). Detected in heart and soleus, a postural muscle group of the hindlimb containing the highest enrichment of slow-twitch muscle fibers. Also expressed in diaphragm, which contains some slow-twitch fibers. Not detected in the quadriceps, a fast-twitch muscle group, or in cardiac atrial muscle. Not expressed in the prenatal heart but gradually increases in abundance postnatally.

The protein resides in the sarcoplasmic reticulum membrane. Enhances the activity of ATP2A1/SERCA1 ATPase in sarcoplasmic reticulum by displacing ATP2A1/SERCA1 inhibitors, thereby acting as a key regulator of skeletal muscle activity. Also enhances the activity of the ATP2A2/SERCA2 ATPase. Does not directly stimulate SERCA pump activity. Binds preferentially to the phosphorylated E1 and E2 conformational forms of ATP2A2 which predominate at high Ca(2+) concentrations during the systolic phase of the cardiac cycle. Competes with ATP2A2 inhibitor phospholamban (PLN) for binding to ATP2A2 and displaces PLN. Can activate ATP2A2 directly in the absence of PLN. Also enhances sarcoplasmic reticulum Ca(2+) uptake and myocyte contractility by displacing the SERCA inhibitory peptides sarcolipin (SLN) and myoregulin (MRLN). This is Sarcoplasmic/endoplasmic reticulum calcium ATPase regulator DWORF from Mus musculus (Mouse).